Reading from the N-terminus, the 141-residue chain is Auxin-responsive protein SAUR62 (141 aa).

The protein belongs to the ARG7 family. Expressed in stamen filaments and petals.

Its subcellular location is the cell membrane. Functionally, may promote auxin-stimulated organ elongation, such as hypocotyls, stamen filaments and petals. This chain is Auxin-responsive protein SAUR62, found in Arabidopsis thaliana (Mouse-ear cress).